Here is a 394-residue protein sequence, read N- to C-terminus: Myb-related protein 2 (394 aa).

Positions 42 to 102 constitute an HTH myb-type domain; sequence TDAKPRLKWT…HLQKYRLSKN (61 aa). The H-T-H motif DNA-binding region spans 73–98; the sequence is PKTIMKVMGIPGLTLYHLKSHLQKYR. The tract at residues 148-168 is coiled coil; that stretch reads GEALQMQIEVQRRLHEQLEVQ. Positions 161–166 match the LHEQLE motif; it reads LHEQLE. A disordered region spans residues 338 to 363; that stretch reads LHGHKSQHQQGNNEDHKLETRNRKGM. Residues 350 to 363 are compositionally biased toward basic and acidic residues; sequence NEDHKLETRNRKGM.

The protein belongs to the MYB-CC family. In terms of assembly, isoform 1: Homodimer. Isoform 3: Does not form homodimer. In terms of tissue distribution, expressed in phloem and/or cambium.

Its subcellular location is the nucleus. Transcriptional activator that may activate the transcription of specific genes involved in nitrogen uptake or assimilation. Acts redundantly with MYR1 as a repressor of flowering and organ elongation under decreased light intensity. Represses gibberellic acid (GA)-dependent responses and affects levels of bioactive GA. The polypeptide is Myb-related protein 2 (Arabidopsis thaliana (Mouse-ear cress)).